Reading from the N-terminus, the 388-residue chain is Phosphopentomutase (388 aa).

Residues aspartate 10, aspartate 282, histidine 287, aspartate 323, histidine 324, and histidine 335 each contribute to the Mn(2+) site.

It belongs to the phosphopentomutase family. Requires Mn(2+) as cofactor.

It localises to the cytoplasm. It catalyses the reaction 2-deoxy-alpha-D-ribose 1-phosphate = 2-deoxy-D-ribose 5-phosphate. It carries out the reaction alpha-D-ribose 1-phosphate = D-ribose 5-phosphate. It functions in the pathway carbohydrate degradation; 2-deoxy-D-ribose 1-phosphate degradation; D-glyceraldehyde 3-phosphate and acetaldehyde from 2-deoxy-alpha-D-ribose 1-phosphate: step 1/2. Its function is as follows. Isomerase that catalyzes the conversion of deoxy-ribose 1-phosphate (dRib-1-P) and ribose 1-phosphate (Rib-1-P) to deoxy-ribose 5-phosphate (dRib-5-P) and ribose 5-phosphate (Rib-5-P), respectively. This is Phosphopentomutase from Desulfitobacterium hafniense (strain DSM 10664 / DCB-2).